The sequence spans 503 residues: Glucose-6-phosphate 1-dehydrogenase (503 aa).

NADP(+) is bound by residues 14–21 (GASGDLSK), Arg-49, and Lys-158. D-glucose 6-phosphate is bound by residues Lys-158, 188–192 (HYLGK), Glu-226, and Asp-245. His-250 (proton acceptor) is an active-site residue. Residue Lys-341 participates in NADP(+) binding. Lys-344 contacts D-glucose 6-phosphate. NADP(+)-binding residues include Lys-350, Arg-354, and Arg-376. Gln-378 is a D-glucose 6-phosphate binding site. Residues 384–386 (YLK), Arg-471, and Tyr-487 each bind NADP(+).

This sequence belongs to the glucose-6-phosphate dehydrogenase family.

The enzyme catalyses D-glucose 6-phosphate + NADP(+) = 6-phospho-D-glucono-1,5-lactone + NADPH + H(+). The protein operates within carbohydrate degradation; pentose phosphate pathway; D-ribulose 5-phosphate from D-glucose 6-phosphate (oxidative stage): step 1/3. Its function is as follows. Catalyzes the rate-limiting step of the oxidative pentose-phosphate pathway, which represents a route for the dissimilation of carbohydrates besides glycolysis. The main function of this enzyme is to provide reducing power (NADPH) and pentose phosphates for fatty acid and nucleic acid synthesis. The G6PDH activity is required to cope with hydrogen peroxide and potassium bisulfite stresses and plays a role in adaptation to conditions used in wine fermentations. The sequence is that of Glucose-6-phosphate 1-dehydrogenase from Hanseniaspora uvarum (Yeast).